The chain runs to 275 residues: Putative methylglyoxal reductase DkgA (275 aa).

Y51 acts as the Proton donor in catalysis. H107 contributes to the substrate binding site. Residue S187–N241 participates in NADP(+) binding.

This sequence belongs to the aldo/keto reductase family. As to quaternary structure, monomer.

Its subcellular location is the cytoplasm. The enzyme catalyses hydroxyacetone + NADP(+) = methylglyoxal + NADPH + H(+). Functionally, aldo-keto reductase that significantly contributes to cellular methylglyoxal detoxification by catalyzing the NADPH-dependent conversion of methylglyoxal to acetol. The chain is Putative methylglyoxal reductase DkgA from Salmonella typhi.